A 318-amino-acid chain; its full sequence is Ribose-phosphate pyrophosphokinase (318 aa).

Residues 43–45 and 102–103 each bind ATP; these read DGE and RQ. Residues histidine 136 and aspartate 176 each contribute to the Mg(2+) site. Lysine 199 is an active-site residue. Residues arginine 201, aspartate 225, and 229–233 contribute to the D-ribose 5-phosphate site; that span reads DTAGT.

It belongs to the ribose-phosphate pyrophosphokinase family. Class I subfamily. In terms of assembly, homohexamer. Requires Mg(2+) as cofactor.

It is found in the cytoplasm. The enzyme catalyses D-ribose 5-phosphate + ATP = 5-phospho-alpha-D-ribose 1-diphosphate + AMP + H(+). Its pathway is metabolic intermediate biosynthesis; 5-phospho-alpha-D-ribose 1-diphosphate biosynthesis; 5-phospho-alpha-D-ribose 1-diphosphate from D-ribose 5-phosphate (route I): step 1/1. In terms of biological role, involved in the biosynthesis of the central metabolite phospho-alpha-D-ribosyl-1-pyrophosphate (PRPP) via the transfer of pyrophosphoryl group from ATP to 1-hydroxyl of ribose-5-phosphate (Rib-5-P). This Listeria ivanovii protein is Ribose-phosphate pyrophosphokinase.